The primary structure comprises 426 residues: Dihydroorotase (426 aa).

H62 and H64 together coordinate Zn(2+). Residues 64–66 (HLR) and N96 each bind substrate. Residues D154, H181, and H234 each coordinate Zn(2+). N280 is a substrate binding site. D307 provides a ligand contact to Zn(2+). D307 is a catalytic residue. Residues H311 and 325–326 (FG) each bind substrate.

The protein belongs to the metallo-dependent hydrolases superfamily. DHOase family. Class I DHOase subfamily. The cofactor is Zn(2+).

The enzyme catalyses (S)-dihydroorotate + H2O = N-carbamoyl-L-aspartate + H(+). The protein operates within pyrimidine metabolism; UMP biosynthesis via de novo pathway; (S)-dihydroorotate from bicarbonate: step 3/3. Functionally, catalyzes the reversible cyclization of carbamoyl aspartate to dihydroorotate. In Desulforapulum autotrophicum (strain ATCC 43914 / DSM 3382 / VKM B-1955 / HRM2) (Desulfobacterium autotrophicum), this protein is Dihydroorotase.